Here is a 682-residue protein sequence, read N- to C-terminus: E3 ubiquitin-protein ligase RNF103 (682 aa).

The next 4 membrane-spanning stretches (helical) occupy residues F6 to V26, L326 to Q346, L366 to F386, and M411 to I431. Acidic residues predominate over residues E525–N542. A disordered region spans residues E525–S549. The RING-type zinc-finger motif lies at C618 to R660.

As to quaternary structure, interacts with DERL1 and VCP. Expressed in different tissues including hippocampus, cerebral cortex, heart, kidney, spleen and lung. Expression is increased in hippocampus and frontal cortex after chronic treatment with antidepressants.

Its subcellular location is the endoplasmic reticulum membrane. The enzyme catalyses S-ubiquitinyl-[E2 ubiquitin-conjugating enzyme]-L-cysteine + [acceptor protein]-L-lysine = [E2 ubiquitin-conjugating enzyme]-L-cysteine + N(6)-ubiquitinyl-[acceptor protein]-L-lysine.. Its pathway is protein modification; protein ubiquitination. Acts as an E2-dependent E3 ubiquitin-protein ligase, probably involved in the ER-associated protein degradation pathway. This Rattus norvegicus (Rat) protein is E3 ubiquitin-protein ligase RNF103 (Rnf103).